The chain runs to 252 residues: 5'-nucleotidase SurE (252 aa).

The a divalent metal cation site is built by aspartate 8, aspartate 9, serine 40, and asparagine 93.

The protein belongs to the SurE nucleotidase family. It depends on a divalent metal cation as a cofactor.

The protein resides in the cytoplasm. The enzyme catalyses a ribonucleoside 5'-phosphate + H2O = a ribonucleoside + phosphate. Functionally, nucleotidase that shows phosphatase activity on nucleoside 5'-monophosphates. The protein is 5'-nucleotidase SurE of Methylocella silvestris (strain DSM 15510 / CIP 108128 / LMG 27833 / NCIMB 13906 / BL2).